Here is a 457-residue protein sequence, read N- to C-terminus: Guanine nucleotide-binding protein subunit alpha homolog (457 aa).

In terms of domain architecture, G-alpha spans 131–457 (RQVKLLLLGA…QRNLNALMLQ (327 aa)). The tract at residues 134 to 147 (KLLLLGAGESGKST) is G1 motif. GTP is bound by residues 139-146 (GAGESGKS), 274-280 (LHCRKAT), 299-303 (DVGGQ), 369-372 (NKTD), and Ala-429. Residues Ser-146 and Thr-280 each coordinate Mg(2+). Residues 272 to 280 (DILHCRKAT) form a G2 motif region. The interval 295-304 (FVFVDVGGQR) is G3 motif. The segment at 365–372 (ILFLNKTD) is G4 motif. The tract at residues 427–432 (TTAIDT) is G5 motif.

It belongs to the G-alpha family. G(12) subfamily. In terms of assembly, g proteins are composed of 3 units; alpha, beta and gamma. The alpha chain contains the guanine nucleotide binding site. In ovary, expressed in nurse cells and oocyte. In early embryos, distributed uniformly. At the extended germband stage, accumulates in the mesoderm.

It is found in the cytoplasm. May play a role in a signal transduction pathway used during gastrulation. Required specifically for the ventral furrow and posterior midgut invaginations, where it is necessary for coordinating cell shape changes. Functionally, guanine nucleotide-binding proteins (G proteins) are involved as modulators or transducers in various transmembrane signaling systems. The sequence is that of Guanine nucleotide-binding protein subunit alpha homolog (cta) from Drosophila melanogaster (Fruit fly).